Reading from the N-terminus, the 291-residue chain is NAD kinase (291 aa).

Asp73 functions as the Proton acceptor in the catalytic mechanism. NAD(+)-binding positions include 73–74, 147–148, Arg175, Asp177, and Gln246; these read DG and ND.

It belongs to the NAD kinase family. The cofactor is a divalent metal cation.

It localises to the cytoplasm. The enzyme catalyses NAD(+) + ATP = ADP + NADP(+) + H(+). Involved in the regulation of the intracellular balance of NAD and NADP, and is a key enzyme in the biosynthesis of NADP. Catalyzes specifically the phosphorylation on 2'-hydroxyl of the adenosine moiety of NAD to yield NADP. The sequence is that of NAD kinase from Chromobacterium violaceum (strain ATCC 12472 / DSM 30191 / JCM 1249 / CCUG 213 / NBRC 12614 / NCIMB 9131 / NCTC 9757 / MK).